Here is a 348-residue protein sequence, read N- to C-terminus: MAPQAHDRDKALDLALAQIDKNFGKGSVMRLGEGVRQPIAVIPTGSISLDVALGIGGLPRGRVVEIYGPESSGKTTVALHAVANAQAAGGIAAFIDAEHALDPDYAQKLGVDTDALLVSQPDTGEQALEIADMLIRSGALDILVVDSVAALVPRAEIEGEMGDSHVGLQARLMSQALRKMTGALSNSGTTAIFINQLREKIGVMFGSPETTTGGKALKFYSSVRLDVRRIETLKDGTDAVGNRTRVKVVKNKVAPPFKQAEFDILYGQGISKEGSLIDMGVEHGFIRKSGSWYTYEGDQLGQGKENARKFLLENTDIRDEIEKKIKEKLGIGADVTAAATDDAAPVEF.

Position 68 to 75 (68 to 75) interacts with ATP; the sequence is GPESSGKT.

It belongs to the RecA family.

The protein resides in the cytoplasm. In terms of biological role, can catalyze the hydrolysis of ATP in the presence of single-stranded DNA, the ATP-dependent uptake of single-stranded DNA by duplex DNA, and the ATP-dependent hybridization of homologous single-stranded DNAs. It interacts with LexA causing its activation and leading to its autocatalytic cleavage. The chain is Protein RecA from Rhodococcus opacus (strain B4).